We begin with the raw amino-acid sequence, 240 residues long: MVERDNELKGTTFTISVLHISDGKPERIRQLLAAKVAQAPQFFNCAPLVINVERLTDIPDFEQLKELVESEDFVLVGITGAQSEAMKTAAKAAGLAVMASGKSRKAEPQPQPEPAPTPAPIVEVKAVPAPLVASKVHVGPVRSGQQLYAAGTSLVVLGSVSPGAEVIADDSIHIYGTLRGRAIAGAKGNPQARIYCQQLQAELLSIAGTFQLSDALPAGLIQQPVHVRLDNEQLRIDRIK.

It belongs to the MinC family. In terms of assembly, interacts with MinD and FtsZ.

In terms of biological role, cell division inhibitor that blocks the formation of polar Z ring septums. Rapidly oscillates between the poles of the cell to destabilize FtsZ filaments that have formed before they mature into polar Z rings. Prevents FtsZ polymerization. This Aeromonas hydrophila subsp. hydrophila (strain ATCC 7966 / DSM 30187 / BCRC 13018 / CCUG 14551 / JCM 1027 / KCTC 2358 / NCIMB 9240 / NCTC 8049) protein is Probable septum site-determining protein MinC.